Here is a 581-residue protein sequence, read N- to C-terminus: Protein FAM83D (581 aa).

The segment at Met-1–Ser-297 is DUF1669. The tract at residues Pro-75–Pro-101 is disordered. A compositionally biased stretch (polar residues) spans Phe-88–Thr-98. At Ser-296 the chain carries Phosphoserine. The segment at Thr-338 to Gln-581 is required for interaction with KIF22 and function in chromosome congression. Disordered stretches follow at residues Glu-366–Val-401 and Gln-426–Lys-503. Over residues Phe-369–Thr-382 the composition is skewed to basic and acidic residues. The segment covering Gln-426 to Thr-438 has biased composition (low complexity). Residue Ser-456 is modified to Phosphoserine. Residues Ser-462–Gln-488 show a composition bias toward low complexity. Position 507 is a phosphothreonine (Thr-507).

The protein belongs to the FAM83 family. In terms of assembly, interacts with FBXW7; promotes FBXW7 degradation. May interact with RAF1. Interacts with KIF22; recruits KIF22 to mitotic spindle microtubules. Interacts (via C-terminus) with DYNLL1. Interacts with HMMR. Directly interacts (via DUF1669) with CSNK1A1 and CSNK1A1L. In terms of processing, phosphorylated during mitosis.

The protein resides in the cytoplasm. Its subcellular location is the cytoskeleton. It localises to the spindle. The protein localises to the spindle pole. Its function is as follows. Through the degradation of FBXW7, may act indirectly on the expression and downstream signaling of MTOR, JUN and MYC. May play also a role in cell proliferation through activation of the ERK1/ERK2 signaling cascade. May also be important for proper chromosome congression and alignment during mitosis through its interaction with KIF22. The chain is Protein FAM83D from Bos taurus (Bovine).